Here is a 129-residue protein sequence, read N- to C-terminus: Large ribosomal subunit protein bL12c (129 aa).

Residues 101–123 (KPIKEGMSKADAEAGKKQLEEAG) are compositionally biased toward basic and acidic residues. The segment at 101-129 (KPIKEGMSKADAEAGKKQLEEAGAKATLK) is disordered.

It belongs to the bacterial ribosomal protein bL12 family. Homodimer. Part of the ribosomal stalk of the 50S ribosomal subunit. Forms a multimeric L10(L12)X complex, where L10 forms an elongated spine to which 2 to 4 L12 dimers bind in a sequential fashion. Binds GTP-bound translation factors.

The protein localises to the plastid. Its subcellular location is the chloroplast. Functionally, forms part of the ribosomal stalk which helps the ribosome interact with GTP-bound translation factors. Is thus essential for accurate translation. This is Large ribosomal subunit protein bL12c from Guillardia theta (Cryptophyte).